The sequence spans 129 residues: Small ribosomal subunit protein uS8 (129 aa).

It belongs to the universal ribosomal protein uS8 family. As to quaternary structure, part of the 30S ribosomal subunit. Contacts proteins S5 and S12.

One of the primary rRNA binding proteins, it binds directly to 16S rRNA central domain where it helps coordinate assembly of the platform of the 30S subunit. The sequence is that of Small ribosomal subunit protein uS8 from Dichelobacter nodosus (strain VCS1703A).